We begin with the raw amino-acid sequence, 328 residues long: Beta-ketoacyl-[acyl-carrier-protein] synthase III 2 (328 aa).

Catalysis depends on residues cysteine 113 and histidine 255. The interval 256 to 260 (QANAR) is ACP-binding. Asparagine 285 is an active-site residue.

It belongs to the thiolase-like superfamily. FabH family. In terms of assembly, homodimer.

The protein localises to the cytoplasm. It carries out the reaction malonyl-[ACP] + acetyl-CoA + H(+) = 3-oxobutanoyl-[ACP] + CO2 + CoA. Its pathway is lipid metabolism; fatty acid biosynthesis. Functionally, catalyzes the condensation reaction of fatty acid synthesis by the addition to an acyl acceptor of two carbons from malonyl-ACP. Catalyzes the first condensation reaction which initiates fatty acid synthesis and may therefore play a role in governing the total rate of fatty acid production. Possesses both acetoacetyl-ACP synthase and acetyl transacylase activities. Its substrate specificity determines the biosynthesis of branched-chain and/or straight-chain of fatty acids. This chain is Beta-ketoacyl-[acyl-carrier-protein] synthase III 2, found in Lactiplantibacillus plantarum (strain ATCC BAA-793 / NCIMB 8826 / WCFS1) (Lactobacillus plantarum).